The sequence spans 396 residues: ATP-dependent RNA helicase eIF4A (396 aa).

Residues 22–50 (YSFDDLNLKPNIVRGIFGYGYESPSAIQQ) carry the Q motif motif. One can recognise a Helicase ATP-binding domain in the interval 53–223 (ILPITEGRDV…TKFMNNPVRI (171 aa)). 66–73 (AQSGTGKT) is an ATP binding site. Positions 171–174 (DEAD) match the DEAD box motif. Positions 234–395 (GIKQFYINVE…EMPANIGELF (162 aa)) constitute a Helicase C-terminal domain.

Belongs to the DEAD box helicase family. eIF4A subfamily. In terms of assembly, component of the eIF4F complex, which composition varies with external and internal environmental conditions. It is composed of at least eIF4A, eIF4E and eIF4G.

It is found in the cytoplasm. It catalyses the reaction ATP + H2O = ADP + phosphate + H(+). Its function is as follows. ATP-dependent RNA helicase which is a subunit of the eIF4F complex involved in cap recognition and is required for mRNA binding to ribosome. In the current model of translation initiation, eIF4A unwinds RNA secondary structures in the 5'-UTR of mRNAs which is necessary to allow efficient binding of the small ribosomal subunit, and subsequent scanning for the initiator codon. This chain is ATP-dependent RNA helicase eIF4A (TIF1), found in Meyerozyma guilliermondii (strain ATCC 6260 / CBS 566 / DSM 6381 / JCM 1539 / NBRC 10279 / NRRL Y-324) (Yeast).